We begin with the raw amino-acid sequence, 175 residues long: Glucagon family neuropeptides (175 aa).

The N-terminal stretch at 1–23 is a signal peptide; that stretch reads MSGNVYKTLLTLLVYGLIMHCNV. Positions 24 to 80 are excised as a propeptide; that stretch reads YCSPDRWTPVPGAKLEEEVYDEDGNTLQDFALRAGAPGGGGPRPRWGRCTALYYPPG. The segment at 149–157 is important for receptor binding; sequence VKKYLAAVL. L157 carries the leucine amide modification. K168 carries the lysine amide modification. A propeptide spanning residues 172–175 is cleaved from the precursor; the sequence is VAYL.

The protein belongs to the glucagon family.

The protein localises to the secreted. In terms of biological role, primary role of GRF is to release GH from the pituitary. Its function is as follows. PACAP is a neuropeptide involved in diverse array of physiological processes through activating the PACAP subfamily of class B1 G protein-coupled receptors: VIP receptor 1 (VIPR1), VIP receptor 2 (VIPR2), and PACAP type I receptor (ADCYAP1R1). Exerts neuroprotective and general cytoprotective effects due to anti-apoptotic, anti-inflammatory, and antioxidant actions. Promotes neuron projection development through the RAPGEF2/Rap1/B-Raf/ERK pathway. In chromaffin cells, induces long-lasting increase of intracellular calcium concentrations and neuroendocrine secretion. Involved in the control of glucose homeostasis, induces insulin secretion by pancreatic beta cells. PACAP exists in two bioactive forms from proteolysis of the same precursor protein, PACAP27 and PACAP38, which differ by eleven amino acid residues in the C-terminus. This is Glucagon family neuropeptides (ADCYAP1) from Gallus gallus (Chicken).